We begin with the raw amino-acid sequence, 318 residues long: V-set and immunoglobulin domain-containing protein 1 (318 aa).

The first 19 residues, 1-19, serve as a signal peptide directing secretion; that stretch reads MSFLLFITLGLSLTALSHC. Positions 20-131 constitute an Ig-like V-type domain; that stretch reads VQVTIQNPII…SSGQGKILLT (112 aa). Residues 20–233 are Extracellular-facing; the sequence is VQVTIQNPII…TGGEGGVIAA (214 aa). Disulfide bonds link C41/C114 and C157/C207. One can recognise an Ig-like C2-type domain in the interval 136–223; the sequence is PSVPHCSIRG…GNATCELNLH (88 aa). A helical membrane pass occupies residues 234 to 254; that stretch reads AVIGGLLAAAIIIAIVWFLVV. The Cytoplasmic portion of the chain corresponds to 255 to 318; it reads KRKQKKQLPP…ANGETEEPTA (64 aa). Positions 261-318 are disordered; it reads QLPPTKEMKTGGNQYMAVSGEANEPPKENLGASEPTETIQFHDHAENAANGETEEPTA.

Expressed in thymocytes.

Its subcellular location is the membrane. The polypeptide is V-set and immunoglobulin domain-containing protein 1 (vsig1) (Xenopus laevis (African clawed frog)).